Reading from the N-terminus, the 408-residue chain is DNA primase DnaG (408 aa).

The region spanning 171–250 (DAIIIVEGRA…AYSPRGKSVE (80 aa)) is the Toprim domain. Mg(2+) is bound by residues glutamate 177, aspartate 219, and aspartate 221. The tract at residues 276–323 (AEENVERLPPSAAPAEVRAPAGAGRTSEGERPPRREWDSKPPSTLGEH) is disordered. The segment covering 284 to 298 (PPSAAPAEVRAPAGA) has biased composition (low complexity). Residues 302–314 (SEGERPPRREWDS) are compositionally biased toward basic and acidic residues.

It belongs to the archaeal DnaG primase family. In terms of assembly, forms a ternary complex with MCM helicase and DNA. It depends on Mg(2+) as a cofactor.

It catalyses the reaction ssDNA + n NTP = ssDNA/pppN(pN)n-1 hybrid + (n-1) diphosphate.. In terms of biological role, RNA polymerase that catalyzes the synthesis of short RNA molecules used as primers for DNA polymerase during DNA replication. This is DNA primase DnaG from Methanoculleus marisnigri (strain ATCC 35101 / DSM 1498 / JR1).